A 617-amino-acid polypeptide reads, in one-letter code: Regulatory solute carrier protein family 1 member 1 (617 aa).

Residues 1–22 (MSSLPTSDGFNHPARSSGQSPD) show a composition bias toward polar residues. 3 disordered regions span residues 1–106 (MSSL…EITV), 155–181 (ENQN…VAQQ), and 217–237 (KGNG…IPSS). Composition is skewed to basic and acidic residues over residues 43–52 (SDSDRIEPKA) and 66–83 (SEKK…HASS). Polar residues-rich tracts occupy residues 89 to 103 (TDQS…SSEE) and 155 to 165 (ENQNLSQVSDP). The tract at residues 410 to 412 (QCP) is involved in post-transcriptional down-regulation of SLC5A1. The UBA domain occupies 571–611 (IFPATDIDRILRAGFTLQEALGALHRVGGNADLALLVLLAK).

Interacts with YRDC. Expressed in small intestine, kidney and brain.

It localises to the cell membrane. The protein localises to the nucleus. It is found in the golgi apparatus. Its subcellular location is the trans-Golgi network. Its function is as follows. Mediates transcriptional and post-transcriptional regulation of SLC5A1. Inhibits a dynamin and PKC-dependent exocytotic pathway of SLC5A1. Also involved in transcriptional regulation of SLC22A2. Exhibits glucose-dependent, short-term inhibition of SLC5A1 and SLC22A2 by inhibiting the release of vesicles from the trans-Golgi network. In Homo sapiens (Human), this protein is Regulatory solute carrier protein family 1 member 1 (RSC1A1).